The sequence spans 99 residues: Beta-defensin 127 (99 aa).

Residues 1-20 (MGLFMIIAILLFQKPTVTEQ) form the signal peptide. 3 disulfides stabilise this stretch: Cys24/Cys53, Cys33/Cys47, and Cys37/Cys54. Residues 66 to 99 (ITKPSHPKPATLALTLQDYVTIIENFPSLKTQST) constitute a propeptide that is removed on maturation.

Belongs to the beta-defensin family.

Its subcellular location is the secreted. In terms of biological role, has antibacterial activity. The polypeptide is Beta-defensin 127 (DEFB127) (Pan troglodytes (Chimpanzee)).